The following is a 1087-amino-acid chain: Transcription factor AP2-Z (1087 aa).

Positions 586–682 (GRVYKVIVRG…IKYNSVPDSL (97 aa)) form a DNA-binding region, AP2.

The protein belongs to the AP2/ERF transcription factor family. AP2 subfamily.

It localises to the nucleus. Its subcellular location is the chromosome. Transcription factor which binds the 5'-[TC][AC]TG[AT]AC[AG]-3' motif. During the mosquito vector stage, plays an essential role in the zygote for de novo transcription of genes required for ookinete formation. The protein is Transcription factor AP2-Z of Plasmodium berghei (strain Anka).